Consider the following 385-residue polypeptide: MELQEVLHMNGGEGDASYAKNSSFNQLVLAKVKPVLEQCVGELLRANLPNINKCIKVADLGCASGPNTLLTVRDIVQSIDKVRQEMKNELERPTIQVFLTDLFQNDFNSVFMLLPSFYRKLEKENGRKIGSCLIAAMPGSFHGRLFPEESMHFLHSSYSLQFLSQVPSGLVTELGITANKRSIYSSKASPPPVQKAYLDQFTKDFTTFLRIRSEELLSRGRMLLTCICKGDEFDGPNTMDLLEMAINDLVVEGHLEEEKLDSFNVPIYAASVEELKCIVEEEGSFEILYLETFKLRYDAGFSIDDDCQVRSHSPEYSDEHARAAHVASLLRSVYEPILANHFGEAIIPDIFHRFATNAAKVIRLGKGFYNNLIISLAKKPEKSDI.

S-adenosyl-L-homocysteine is bound by residues Tyr-18, Cys-62, Asn-67, Asp-101, Leu-102, Ser-140, and Phe-141. Residues Tyr-158, Gln-161, and Phe-162 each contribute to the caffeine site. Residue Asn-179 coordinates Mg(2+). Thr-238 serves as a coordination point for caffeine. Mg(2+) is bound by residues Asp-261, Phe-263, and Asn-264. Residue Tyr-369 participates in caffeine binding.

Belongs to the methyltransferase superfamily. Type-7 methyltransferase family. The cofactor is Mg(2+). In terms of tissue distribution, expressed in roots, stems, young and old leaves.

Its pathway is alkaloid biosynthesis. May be involved in the biosynthesis of caffeine. The sequence is that of Probable caffeine synthase 3 from Coffea arabica (Arabian coffee).